The following is an 81-amino-acid chain: ATP synthase subunit C, cyanelle (81 aa).

A run of 2 helical transmembrane segments spans residues 7-27 and 57-77; these read AASVIAAALAVGLAAIGPGIG and LAFMEALTIYGLVVALALLFA.

Belongs to the ATPase C chain family. As to quaternary structure, F-type ATPases have 2 components, F(1) - the catalytic core - and F(0) - the membrane proton channel. F(1) has five subunits: alpha(3), beta(3), gamma(1), delta(1), epsilon(1). F(0) has four main subunits: a(1), b(1), b'(1) and c(10-14). The alpha and beta chains form an alternating ring which encloses part of the gamma chain. F(1) is attached to F(0) by a central stalk formed by the gamma and epsilon chains, while a peripheral stalk is formed by the delta, b and b' chains.

The protein resides in the plastid. Its subcellular location is the cyanelle thylakoid membrane. F(1)F(0) ATP synthase produces ATP from ADP in the presence of a proton or sodium gradient. F-type ATPases consist of two structural domains, F(1) containing the extramembraneous catalytic core and F(0) containing the membrane proton channel, linked together by a central stalk and a peripheral stalk. During catalysis, ATP synthesis in the catalytic domain of F(1) is coupled via a rotary mechanism of the central stalk subunits to proton translocation. In terms of biological role, key component of the F(0) channel; it plays a direct role in translocation across the membrane. A homomeric c-ring of between 10-14 subunits forms the central stalk rotor element with the F(1) delta and epsilon subunits. The polypeptide is ATP synthase subunit C, cyanelle (Cyanophora paradoxa).